An 883-amino-acid polypeptide reads, in one-letter code: Protein P (883 aa).

The interval 1 to 183 is terminal protein domain (TP); the sequence is MHPFSRLFRN…GKPYSWEHRQ (183 aa). Residues 184–386 form a spacer region; the sequence is LVQHNGQQHK…YCIHHIVSSL (203 aa). Residues 298-344 are disordered; sequence RNSGHTTWFSSASNSNKSRSREKAYSSNSTSKRYSPPLNYEKSDFSS. Positions 387–728 are polymerase/reverse transcriptase domain (RT); that stretch reads DDWGPCTVTG…YEELWPVVRQ (342 aa). The Reverse transcriptase domain occupies 397-638; it reads DVTIKSPRTP…NHLHFMGYVI (242 aa). Residues aspartate 469, aspartate 589, and aspartate 590 each coordinate Mg(2+).

Belongs to the hepadnaviridae P protein family.

It catalyses the reaction DNA(n) + a 2'-deoxyribonucleoside 5'-triphosphate = DNA(n+1) + diphosphate. It carries out the reaction Endonucleolytic cleavage to 5'-phosphomonoester.. Its activity is regulated as follows. Activated by host HSP70 and HSP40 in vitro to be able to bind the epsilon loop of the pgRNA. Because deletion of the RNase H region renders the protein partly chaperone-independent, the chaperones may be needed indirectly to relieve occlusion of the RNA-binding site by this domain. Inhibited by several reverse-transcriptase inhibitors: Lamivudine, Adefovir and Entecavir. Functionally, multifunctional enzyme that converts the viral RNA genome into dsDNA in viral cytoplasmic capsids. This enzyme displays a DNA polymerase activity that can copy either DNA or RNA templates, and a ribonuclease H (RNase H) activity that cleaves the RNA strand of RNA-DNA heteroduplexes in a partially processive 3'- to 5'-endonucleasic mode. Neo-synthesized pregenomic RNA (pgRNA) are encapsidated together with the P protein, and reverse-transcribed inside the nucleocapsid. Initiation of reverse-transcription occurs first by binding the epsilon loop on the pgRNA genome, and is initiated by protein priming, thereby the 5'-end of (-)DNA is covalently linked to P protein. Partial (+)DNA is synthesized from the (-)DNA template and generates the relaxed circular DNA (RC-DNA) genome. After budding and infection, the RC-DNA migrates in the nucleus, and is converted into a plasmid-like covalently closed circular DNA (cccDNA). The activity of P protein does not seem to be necessary for cccDNA generation, and is presumably released from (+)DNA by host nuclear DNA repair machinery. This is Protein P from Woodchuck hepatitis B virus (isolate 2) (WHV).